Reading from the N-terminus, the 268-residue chain is Large ribosomal subunit protein mL46 (268 aa).

A mitochondrion-targeting transit peptide spans 1–25 (MYLKRNIINMQRSFSRQFHISVRNS).

Belongs to the mitochondrion-specific ribosomal protein mL46 family. Component of the mitochondrial large ribosomal subunit (mt-LSU). Mature yeast 74S mitochondrial ribosomes consist of a small (37S) and a large (54S) subunit. The 37S small subunit contains a 15S ribosomal RNA (15S mt-rRNA) and at least 32 different proteins. The 54S large subunit contains a 21S rRNA (21S mt-rRNA) and at least 45 different proteins.

It localises to the mitochondrion. Component of the mitochondrial ribosome (mitoribosome), a dedicated translation machinery responsible for the synthesis of mitochondrial genome-encoded proteins, including at least some of the essential transmembrane subunits of the mitochondrial respiratory chain. The mitoribosomes are attached to the mitochondrial inner membrane and translation products are cotranslationally integrated into the membrane. This chain is Large ribosomal subunit protein mL46 (mrpl17), found in Schizosaccharomyces pombe (strain 972 / ATCC 24843) (Fission yeast).